The following is a 266-amino-acid chain: UPF0294 protein Ent638_0743 (266 aa).

Belongs to the UPF0294 family.

The protein localises to the cytoplasm. In Enterobacter sp. (strain 638), this protein is UPF0294 protein Ent638_0743.